Reading from the N-terminus, the 381-residue chain is ATP synthase subunit a (381 aa).

The interval 24 to 73 is disordered; it reads PVAAPVEQHGQAPEAAPDAHGSPAGEPGAAVEAHAAAAEHGEAAGHEGGH. Over residues 47-59 the composition is skewed to low complexity; that stretch reads AGEPGAAVEAHAA. Residues 60–73 are compositionally biased toward basic and acidic residues; sequence AAEHGEAAGHEGGH. 6 consecutive transmembrane segments (helical) span residues 128 to 148, 190 to 210, 215 to 235, 255 to 275, 290 to 310, and 316 to 336; these read KHVV…LGAV, LVTA…PFSA, NLSV…YAAI, LAPL…TKPF, FVIL…VAFG, and LSIF…FTML. Positions 351-360 are enriched in basic and acidic residues; the sequence is DHGHAEEHGH. The interval 351-381 is disordered; it reads DHGHAEEHGHAGPAAGSEHGSHVAGASPGHG.

Belongs to the ATPase A chain family. F-type ATPases have 2 components, CF(1) - the catalytic core - and CF(0) - the membrane proton channel. CF(1) has five subunits: alpha(3), beta(3), gamma(1), delta(1), epsilon(1). CF(0) has three main subunits: a(1), b(2) and c(9-12). The alpha and beta chains form an alternating ring which encloses part of the gamma chain. CF(1) is attached to CF(0) by a central stalk formed by the gamma and epsilon chains, while a peripheral stalk is formed by the delta and b chains.

It localises to the cell inner membrane. In terms of biological role, key component of the proton channel; it plays a direct role in the translocation of protons across the membrane. The chain is ATP synthase subunit a from Anaeromyxobacter dehalogenans (strain 2CP-C).